Reading from the N-terminus, the 617-residue chain is V-type proton ATPase catalytic subunit A (617 aa).

Threonine 136 carries the post-translational modification Phosphothreonine. 250–257 (GAFGCGKT) contacts ATP. Serine 384 carries the phosphoserine; by AMPK modification.

The protein belongs to the ATPase alpha/beta chains family. V-ATPase is a heteromultimeric enzyme made up of two complexes: the ATP-hydrolytic V1 complex and the proton translocation V0 complex. The V1 complex consists of three catalytic AB heterodimers that form a heterohexamer, three peripheral stalks each consisting of EG heterodimers, one central rotor including subunits D and F, and the regulatory subunits C and H. The proton translocation complex V0 consists of the proton transport subunit a, a ring of proteolipid subunits c9c'', rotary subunit d, subunits e and f, and the accessory subunits ATP6AP1/Ac45 and ATP6AP2/PRR. Interacts with the V0 complex V-ATPase subunit a4 ATP6V0A4. Interacts with WFS1. Interacts with alpha-crystallin B chain/CRYAB and with MTOR, forming a ternary complex. In terms of processing, phosphorylation at Ser-384 by AMPK down-regulates its enzyme activity.

The protein localises to the cytoplasm. It is found in the cytosol. It localises to the cytoplasmic vesicle. The protein resides in the secretory vesicle. Its subcellular location is the clathrin-coated vesicle membrane. The protein localises to the lysosome. The enzyme catalyses ATP + H2O + 4 H(+)(in) = ADP + phosphate + 5 H(+)(out). With respect to regulation, ATP hydrolysis occurs at the interface between the nucleotide-binding domains of subunits A and B. ATP hydrolysis triggers a conformational change in the subunits D and F, which induces a shift of subunit d. The c-ring is subsequently rotated and results in a continuous proton translocation across the membrane. In terms of biological role, catalytic subunit of the V1 complex of vacuolar(H+)-ATPase (V-ATPase), a multisubunit enzyme composed of a peripheral complex (V1) that hydrolyzes ATP and a membrane integral complex (V0) that translocates protons. V-ATPase is responsible for acidifying and maintaining the pH of intracellular compartments and in some cell types, is targeted to the plasma membrane, where it is responsible for acidifying the extracellular environment. In aerobic conditions, involved in intracellular iron homeostasis, thus triggering the activity of Fe(2+) prolyl hydroxylase (PHD) enzymes, and leading to HIF1A hydroxylation and subsequent proteasomal degradation. May play a role in neurite development and synaptic connectivity. This Pongo abelii (Sumatran orangutan) protein is V-type proton ATPase catalytic subunit A (ATP6V1A).